Consider the following 142-residue polypeptide: Cytidine deaminase (142 aa).

The region spanning 9 to 139 (RQLEALKRAA…ELLPMAFGPS (131 aa)) is the CMP/dCMP-type deaminase domain. Position 50–52 (50–52 (NVE)) interacts with substrate. A Zn(2+)-binding site is contributed by C61. E63 serves as the catalytic Proton donor. Positions 96 and 99 each coordinate Zn(2+).

The protein belongs to the cytidine and deoxycytidylate deaminase family. In terms of assembly, homodimer. It depends on Zn(2+) as a cofactor.

The enzyme catalyses cytidine + H2O + H(+) = uridine + NH4(+). The catalysed reaction is 2'-deoxycytidine + H2O + H(+) = 2'-deoxyuridine + NH4(+). This enzyme scavenges exogenous and endogenous cytidine and 2'-deoxycytidine for UMP synthesis. The polypeptide is Cytidine deaminase (CDD1) (Saccharomyces cerevisiae (strain ATCC 204508 / S288c) (Baker's yeast)).